We begin with the raw amino-acid sequence, 278 residues long: NAD-capped RNA hydrolase NudC (278 aa).

Arg-84 is a binding site for substrate. Residues Cys-114 and Cys-117 each contribute to the Zn(2+) site. Glu-127 is a binding site for substrate. Cys-132 and Cys-135 together coordinate Zn(2+). Tyr-140 is a binding site for substrate. Residues Pro-141–Leu-265 enclose the Nudix hydrolase domain. 3 residues coordinate a divalent metal cation: Ala-174, Glu-190, and Glu-194. Residues Gly-175 to Gly-196 carry the Nudix box motif. Gln-208 to Ser-215 contacts substrate. An a divalent metal cation-binding site is contributed by Glu-235. Substrate is bound at residue Ala-257.

The protein belongs to the Nudix hydrolase family. NudC subfamily. Homodimer. Mg(2+) is required as a cofactor. Requires Mn(2+) as cofactor. It depends on Zn(2+) as a cofactor.

The catalysed reaction is a 5'-end NAD(+)-phospho-ribonucleoside in mRNA + H2O = a 5'-end phospho-adenosine-phospho-ribonucleoside in mRNA + beta-nicotinamide D-ribonucleotide + 2 H(+). The enzyme catalyses NAD(+) + H2O = beta-nicotinamide D-ribonucleotide + AMP + 2 H(+). It catalyses the reaction NADH + H2O = reduced beta-nicotinamide D-ribonucleotide + AMP + 2 H(+). Its function is as follows. mRNA decapping enzyme that specifically removes the nicotinamide adenine dinucleotide (NAD) cap from a subset of mRNAs by hydrolyzing the diphosphate linkage to produce nicotinamide mononucleotide (NMN) and 5' monophosphate mRNA. The NAD-cap is present at the 5'-end of some mRNAs and stabilizes RNA against 5'-processing. Has preference for mRNAs with a 5'-end purine. Catalyzes the hydrolysis of a broad range of dinucleotide pyrophosphates. This chain is NAD-capped RNA hydrolase NudC, found in Pseudomonas aeruginosa (strain LESB58).